The following is a 480-amino-acid chain: Chromosomal replication initiator protein DnaA (480 aa).

A domain I, interacts with DnaA modulators region spans residues 1 to 71 (MRHDALFERV…TTLVQQEDSE (71 aa)). The segment at 71 to 137 (EILKVEILVR…RPVQAPLFGS (67 aa)) is domain II. Positions 138–360 (PLDQRYGFDS…GAFNQLLFRR (223 aa)) are domain III, AAA+ region. Residues Gly-184, Gly-186, Lys-187, and Thr-188 each coordinate ATP. The interval 361–480 (SFEPQLSIER…IELLKRLINE (120 aa)) is domain IV, binds dsDNA.

Belongs to the DnaA family. Oligomerizes as a right-handed, spiral filament on DNA at oriC.

The protein localises to the cytoplasm. In terms of biological role, plays an essential role in the initiation and regulation of chromosomal replication. ATP-DnaA binds to the origin of replication (oriC) to initiate formation of the DNA replication initiation complex once per cell cycle. Binds the DnaA box (a 9 base pair repeat at the origin) and separates the double-stranded (ds)DNA. Forms a right-handed helical filament on oriC DNA; dsDNA binds to the exterior of the filament while single-stranded (ss)DNA is stabiized in the filament's interior. The ATP-DnaA-oriC complex binds and stabilizes one strand of the AT-rich DNA unwinding element (DUE), permitting loading of DNA polymerase. After initiation quickly degrades to an ADP-DnaA complex that is not apt for DNA replication. Binds acidic phospholipids. In Rhizobium meliloti (strain 1021) (Ensifer meliloti), this protein is Chromosomal replication initiator protein DnaA.